Here is a 234-residue protein sequence, read N- to C-terminus: uncharacterized protein (234 aa).

One can recognise an ABC transporter domain in the interval 5-234 (MELVDVWKIY…ERRGVVYGDT (230 aa)). ATP is bound at residue 41–48 (GPSGSGKS).

This sequence belongs to the ABC transporter superfamily.

This is an uncharacterized protein from Thermotoga maritima (strain ATCC 43589 / DSM 3109 / JCM 10099 / NBRC 100826 / MSB8).